The primary structure comprises 326 residues: 3-isopropylmalate dehydrogenase (326 aa).

Residues arginine 81, arginine 91, arginine 112, and aspartate 198 each coordinate substrate. Mg(2+)-binding residues include aspartate 198, aspartate 222, and aspartate 226. 255–267 (GAAFDIAGKGIAN) contacts NAD(+).

This sequence belongs to the isocitrate and isopropylmalate dehydrogenases family. In terms of assembly, homotetramer. Mg(2+) is required as a cofactor. Requires Mn(2+) as cofactor.

It localises to the cytoplasm. The enzyme catalyses (2R,3S)-3-isopropylmalate + NAD(+) = 4-methyl-2-oxopentanoate + CO2 + NADH. It participates in amino-acid biosynthesis; L-leucine biosynthesis; L-leucine from 3-methyl-2-oxobutanoate: step 3/4. In terms of biological role, catalyzes the oxidation of 3-carboxy-2-hydroxy-4-methylpentanoate (3-isopropylmalate) to 3-carboxy-4-methyl-2-oxopentanoate. The product decarboxylates to 4-methyl-2 oxopentanoate. The chain is 3-isopropylmalate dehydrogenase (leuB) from Archaeoglobus fulgidus (strain ATCC 49558 / DSM 4304 / JCM 9628 / NBRC 100126 / VC-16).